The chain runs to 522 residues: Echinocystic acid 23-monooxygenase (522 aa).

The chain crosses the membrane as a helical; Signal-anchor for type II membrane protein span at residues 4–24; it reads LPYIATSIACIVILRWALNMM. Asn190 carries an N-linked (GlcNAc...) asparagine glycan. Cys470 is a binding site for heme.

It belongs to the cytochrome P450 family. Heme is required as a cofactor. In terms of tissue distribution, mainly expressed in flowers and flower buds, to a lesser extent in young leaves and, at low levels, in old leaves, stems and roots.

The protein localises to the membrane. It participates in secondary metabolite biosynthesis; terpenoid biosynthesis. Its function is as follows. Component of the oleanane-type triterpene saponins (e.g. saponarioside A and saponarioside B) biosynthetic pathway, leading to the production of natural products with detergent properties used as traditional sources of soap. An oxidoreductase that facilitates the oxidation of the methyl group to a carboxyl group at the C-23 position of echinocystic acid, resulting in the formation of quillaic acid (QA). The protein is Echinocystic acid 23-monooxygenase of Saponaria officinalis (Common soapwort).